The chain runs to 190 residues: Elongation factor P-like protein (190 aa).

It belongs to the elongation factor P family.

In Pseudoalteromonas atlantica (strain T6c / ATCC BAA-1087), this protein is Elongation factor P-like protein.